Reading from the N-terminus, the 216-residue chain is Peptide methionine sulfoxide reductase MsrA (216 aa).

C54 is an active-site residue.

The protein belongs to the MsrA Met sulfoxide reductase family.

It carries out the reaction L-methionyl-[protein] + [thioredoxin]-disulfide + H2O = L-methionyl-(S)-S-oxide-[protein] + [thioredoxin]-dithiol. It catalyses the reaction [thioredoxin]-disulfide + L-methionine + H2O = L-methionine (S)-S-oxide + [thioredoxin]-dithiol. In terms of biological role, has an important function as a repair enzyme for proteins that have been inactivated by oxidation. Catalyzes the reversible oxidation-reduction of methionine sulfoxide in proteins to methionine. This is Peptide methionine sulfoxide reductase MsrA from Xanthomonas campestris pv. campestris (strain ATCC 33913 / DSM 3586 / NCPPB 528 / LMG 568 / P 25).